A 134-amino-acid polypeptide reads, in one-letter code: L-ectoine synthase (134 aa).

This sequence belongs to the ectoine synthase family.

The enzyme catalyses (2S)-4-acetamido-2-aminobutanoate = L-ectoine + H2O. It participates in amine and polyamine biosynthesis; ectoine biosynthesis; L-ectoine from L-aspartate 4-semialdehyde: step 3/3. In terms of biological role, catalyzes the circularization of gamma-N-acetyl-alpha,gamma-diaminobutyric acid (ADABA) to ectoine (1,4,5,6-tetrahydro-2-methyl-4-pyrimidine carboxylic acid), which is an excellent osmoprotectant. In Shouchella clausii (strain KSM-K16) (Alkalihalobacillus clausii), this protein is L-ectoine synthase.